The chain runs to 504 residues: Cobyric acid synthase (504 aa).

The 189-residue stretch at 254–442 folds into the GATase cobBQ-type domain; that stretch reads AIDVAVIRYP…MHDLFHNDMF (189 aa). The Nucleophile role is filled by Cys-336. His-434 is an active-site residue.

It belongs to the CobB/CobQ family. CobQ subfamily.

The protein operates within cofactor biosynthesis; adenosylcobalamin biosynthesis. Its function is as follows. Catalyzes amidations at positions B, D, E, and G on adenosylcobyrinic A,C-diamide. NH(2) groups are provided by glutamine, and one molecule of ATP is hydrogenolyzed for each amidation. This chain is Cobyric acid synthase, found in Anoxybacillus flavithermus (strain DSM 21510 / WK1).